Consider the following 67-residue polypeptide: Putative antitoxin PF1308 (67 aa).

The protein belongs to the UPF0165 family.

In terms of biological role, possibly the antitoxin component of a type II toxin-antitoxin (TA) system. The sequence is that of Putative antitoxin PF1308 from Pyrococcus furiosus (strain ATCC 43587 / DSM 3638 / JCM 8422 / Vc1).